Consider the following 122-residue polypeptide: MIQKETNLVVADNSGAKKVRCIHVFGGTGRRYAALGDQIMVTVKAAVPNGVVKKKDVCKAVVVRCAKEQRRKDGSYIRFDENAVVLLNAQGEPRGTRIFGPVARELRDKRYMKIVSLAPEVL.

The protein belongs to the universal ribosomal protein uL14 family. Part of the 50S ribosomal subunit. Forms a cluster with proteins L3 and L19. In the 70S ribosome, L14 and L19 interact and together make contacts with the 16S rRNA in bridges B5 and B8.

Binds to 23S rRNA. Forms part of two intersubunit bridges in the 70S ribosome. The sequence is that of Large ribosomal subunit protein uL14 from Chlorobaculum parvum (strain DSM 263 / NCIMB 8327) (Chlorobium vibrioforme subsp. thiosulfatophilum).